A 408-amino-acid chain; its full sequence is LL-diaminopimelate aminotransferase (408 aa).

Residues Tyr15 and Gly42 each coordinate substrate. Pyridoxal 5'-phosphate contacts are provided by residues Tyr72, 108-109 (SK), Tyr132, Asn187, Tyr218, and 246-248 (SFS). Residues Lys109, Tyr132, and Asn187 each coordinate substrate. An N6-(pyridoxal phosphate)lysine modification is found at Lys249. Residues Arg257 and Asn291 each contribute to the pyridoxal 5'-phosphate site. Substrate-binding residues include Asn291 and Arg387.

It belongs to the class-I pyridoxal-phosphate-dependent aminotransferase family. LL-diaminopimelate aminotransferase subfamily. Homodimer. The cofactor is pyridoxal 5'-phosphate.

The catalysed reaction is (2S,6S)-2,6-diaminopimelate + 2-oxoglutarate = (S)-2,3,4,5-tetrahydrodipicolinate + L-glutamate + H2O + H(+). It participates in amino-acid biosynthesis; L-lysine biosynthesis via DAP pathway; LL-2,6-diaminopimelate from (S)-tetrahydrodipicolinate (aminotransferase route): step 1/1. Functionally, involved in the synthesis of meso-diaminopimelate (m-DAP or DL-DAP), required for both lysine and peptidoglycan biosynthesis. Catalyzes the direct conversion of tetrahydrodipicolinate to LL-diaminopimelate. This is LL-diaminopimelate aminotransferase from Prochlorococcus marinus (strain NATL2A).